The sequence spans 200 residues: Nucleoside triphosphate pyrophosphatase (200 aa).

The active-site Proton acceptor is D75.

This sequence belongs to the Maf family. The cofactor is a divalent metal cation.

The protein localises to the cytoplasm. The enzyme catalyses a ribonucleoside 5'-triphosphate + H2O = a ribonucleoside 5'-phosphate + diphosphate + H(+). It catalyses the reaction a 2'-deoxyribonucleoside 5'-triphosphate + H2O = a 2'-deoxyribonucleoside 5'-phosphate + diphosphate + H(+). Its function is as follows. Nucleoside triphosphate pyrophosphatase. May have a dual role in cell division arrest and in preventing the incorporation of modified nucleotides into cellular nucleic acids. This is Nucleoside triphosphate pyrophosphatase from Synechococcus sp. (strain CC9311).